Reading from the N-terminus, the 338-residue chain is 1-aminocyclopropane-1-carboxylate deaminase (338 aa).

Lys51 is modified (N6-(pyridoxal phosphate)lysine). Ser78 (nucleophile) is an active-site residue.

This sequence belongs to the ACC deaminase/D-cysteine desulfhydrase family. In terms of assembly, homotrimer. The cofactor is pyridoxal 5'-phosphate.

The enzyme catalyses 1-aminocyclopropane-1-carboxylate + H2O = 2-oxobutanoate + NH4(+). Catalyzes a cyclopropane ring-opening reaction, the irreversible conversion of 1-aminocyclopropane-1-carboxylate (ACC) to ammonia and alpha-ketobutyrate. Allows growth on ACC as a nitrogen source. The sequence is that of 1-aminocyclopropane-1-carboxylate deaminase from Burkholderia ambifaria (strain MC40-6).